The primary structure comprises 664 residues: Two-component response regulator ARR2 (664 aa).

The segment at Met-1–Ser-21 is disordered. The 116-residue stretch at Arg-29 to Val-144 folds into the Response regulatory domain. The residue at position 80 (Asp-80) is a 4-aspartylphosphate. Residues Trp-151 to Lys-215 form a disordered region. Positions Gly-165–Ala-178 are enriched in basic and acidic residues. Residues Asn-180–Arg-191 are compositionally biased toward polar residues. The span at Glu-200–Glu-209 shows a compositional bias: acidic residues. Positions Lys-215–Arg-218 match the Nuclear localization signal motif. Positions Arg-218–Arg-268 form a DNA-binding region, myb-like GARP. Residues Ala-554 to Thr-567 show a composition bias toward low complexity. A disordered region spans residues Ala-554–Pro-589.

The protein belongs to the ARR family. Type-B subfamily. In terms of assembly, binds the target DNA as a monomer. Interacts with histidine-containing phosphotransfer proteins. In terms of processing, two-component system major event consists of a His-to-Asp phosphorelay between a sensor histidine kinase (HK) and a response regulator (RR). In plants, the His-to-Asp phosphorelay involves an additional intermediate named Histidine-containing phosphotransfer protein (HPt). This multistep phosphorelay consists of a His-Asp-His-Asp sequential transfer of a phosphate group between first a His and an Asp of the HK protein, followed by the transfer to a conserved His of the HPt protein and finally the transfer to an Asp in the receiver domain of the RR protein. Phosphorylated in response to cytokinin mediated by AHK3. As to expression, detected in the whole plant. Predominantly expressed in pollen.

It localises to the nucleus. Its function is as follows. Transcriptional activator that binds specifically to the DNA sequence 5'-[AG]GATT-3'. Functions as a response regulator involved in His-to-Asp phosphorelay signal transduction system. Phosphorylation of the Asp residue in the receiver domain activates the ability of the protein to promote the transcription of target genes. Could directly activate some type-A response regulators in response to cytokinins. Involved in the expression of nuclear genes for components of mitochondrial complex I. Promotes cytokinin-mediated leaf longevity. Involved in the ethylene signaling pathway in an ETR1-dependent manner and in the cytokinin signaling pathway. The protein is Two-component response regulator ARR2 (ARR2) of Arabidopsis thaliana (Mouse-ear cress).